The chain runs to 357 residues: Peptide chain release factor 1 (357 aa).

Glutamine 236 is subject to N5-methylglutamine.

Belongs to the prokaryotic/mitochondrial release factor family. Post-translationally, methylated by PrmC. Methylation increases the termination efficiency of RF1.

It is found in the cytoplasm. In terms of biological role, peptide chain release factor 1 directs the termination of translation in response to the peptide chain termination codons UAG and UAA. The polypeptide is Peptide chain release factor 1 (Mycobacterium marinum (strain ATCC BAA-535 / M)).